The primary structure comprises 208 residues: uncharacterized protein (208 aa).

3 disordered regions span residues 91-115, 127-156, and 182-208; these read PGQA…PSQD, QSWS…KRPG, and NKLG…RKFK. Positions 127 to 136 are enriched in polar residues; that stretch reads QSWSSGTSRP.

This is an uncharacterized protein from Rattus norvegicus (Rat).